A 351-amino-acid chain; its full sequence is D-alanine--D-alanine ligase (351 aa).

Residues 135–343 (NQIFLQSGQK…MEEVFSDLIE (209 aa)) enclose the ATP-grasp domain. Residue 167–222 (LETLGFPQFLKPVEGGSSVSVYKITNREQLKEKLALIFESDSKVMSQSFLTGIEVS) coordinates ATP. Positions 298, 310, and 312 each coordinate Mg(2+).

This sequence belongs to the D-alanine--D-alanine ligase family. Mg(2+) serves as cofactor. Requires Mn(2+) as cofactor.

It is found in the cytoplasm. It catalyses the reaction 2 D-alanine + ATP = D-alanyl-D-alanine + ADP + phosphate + H(+). It participates in cell wall biogenesis; peptidoglycan biosynthesis. Its function is as follows. Cell wall formation. This Leptospira interrogans serogroup Icterohaemorrhagiae serovar copenhageni (strain Fiocruz L1-130) protein is D-alanine--D-alanine ligase.